Reading from the N-terminus, the 36-residue chain is IACAPRGLLCFRDKECCKGLTCKGRFVNTWPTFCLV.

3 cysteine pairs are disulfide-bonded: C3–C17, C10–C22, and C16–C34.

As to expression, expressed by the venom gland.

The protein localises to the secreted. Its function is as follows. Neurotoxin. Causes spastic paralysis and death in mice. Moderate inhibitor of L-type calcium channels (Cav1/CACNA1). The sequence is that of U4-ctenitoxin-Pr1a from Phoneutria reidyi (Brazilian Amazonian armed spider).